The sequence spans 732 residues: Beta-galactosidase 5 (732 aa).

The N-terminal stretch at 1–23 (MGTTILVLSKILTFLLTTMLIGS) is a signal peptide. Catalysis depends on Glu-187, which acts as the Proton donor. Glu-256 functions as the Nucleophile in the catalytic mechanism. The N-linked (GlcNAc...) asparagine glycan is linked to Asn-466.

The protein belongs to the glycosyl hydrolase 35 family. In terms of tissue distribution, expressed in leaves and flowers.

It is found in the secreted. The protein resides in the extracellular space. It localises to the apoplast. It carries out the reaction Hydrolysis of terminal non-reducing beta-D-galactose residues in beta-D-galactosides.. The chain is Beta-galactosidase 5 (BGAL5) from Arabidopsis thaliana (Mouse-ear cress).